Reading from the N-terminus, the 132-residue chain is Small ribosomal subunit protein uS8 (132 aa).

This sequence belongs to the universal ribosomal protein uS8 family. As to quaternary structure, part of the 30S ribosomal subunit. Contacts proteins S5 and S12.

In terms of biological role, one of the primary rRNA binding proteins, it binds directly to 16S rRNA central domain where it helps coordinate assembly of the platform of the 30S subunit. The sequence is that of Small ribosomal subunit protein uS8 from Geobacter metallireducens (strain ATCC 53774 / DSM 7210 / GS-15).